Reading from the N-terminus, the 349-residue chain is Isopentenyl-diphosphate delta-isomerase (349 aa).

Residue 5-6 participates in substrate binding; it reads RK. FMN contacts are provided by residues Ser-61, 62–64, Ser-92, and Asn-120; that span reads SMT. 92 to 94 provides a ligand contact to substrate; sequence SMR. Gln-159 serves as a coordination point for substrate. Glu-160 provides a ligand contact to Mg(2+). Residues Lys-189, Thr-219, 269–271, and 290–291 contribute to the FMN site; these read GLR and AR.

Belongs to the IPP isomerase type 2 family. In terms of assembly, homooctamer. Dimer of tetramers. FMN serves as cofactor. Requires NADPH as cofactor. Mg(2+) is required as a cofactor.

Its subcellular location is the cytoplasm. It catalyses the reaction isopentenyl diphosphate = dimethylallyl diphosphate. Involved in the biosynthesis of isoprenoids. Catalyzes the 1,3-allylic rearrangement of the homoallylic substrate isopentenyl (IPP) to its allylic isomer, dimethylallyl diphosphate (DMAPP). The polypeptide is Isopentenyl-diphosphate delta-isomerase (Picrophilus torridus (strain ATCC 700027 / DSM 9790 / JCM 10055 / NBRC 100828 / KAW 2/3)).